The sequence spans 344 residues: Alkyl hydroperoxide reductase Rv2159c (344 aa).

Positions 49 to 50 (AG) are important for interaction with PknI. Catalysis depends on Cys84, which acts as the Cysteine sulfenic acid (-SOH) intermediate.

This sequence belongs to the AhpD family. Interacts with the serine/threonine-protein kinase PknI. The PknI-Rv2159c interaction is mediated through phosphorylation independent physical interaction.

Its activity is regulated as follows. Interaction with PknI increases the peroxidase activity by several folds. Functionally, involved in protection against oxidative stresses. May play a significant role in maintaining the cellular homeostasis during stress and virulence of M.tuberculosis. In vitro, catalyzes the decomposition of cumene hydroperoxide (CHP) to acetophenone. The protein is Alkyl hydroperoxide reductase Rv2159c of Mycobacterium tuberculosis (strain ATCC 25618 / H37Rv).